The chain runs to 107 residues: Putative double-stranded DNA mimic protein ETA_15890 (107 aa).

This sequence belongs to the putative dsDNA mimic protein family.

In terms of biological role, may act as a double-stranded DNA (dsDNA) mimic. Probably regulates the activity of a dsDNA-binding protein. This chain is Putative double-stranded DNA mimic protein ETA_15890, found in Erwinia tasmaniensis (strain DSM 17950 / CFBP 7177 / CIP 109463 / NCPPB 4357 / Et1/99).